A 408-amino-acid polypeptide reads, in one-letter code: Zinc-regulated transporter 1 (408 aa).

3 helical membrane passes run Ile-64–Leu-84, Leu-101–Ala-121, and Trp-141–Asn-161. Residues Thr-234 and Thr-237 each carry the phosphothreonine modification. 5 helical membrane passes run Phe-254 to Val-274, Phe-279 to Ser-299, Trp-315 to Val-335, Gly-351 to Ala-371, and Leu-387 to Trp-407.

The protein belongs to the ZIP transporter (TC 2.A.5) family.

The protein resides in the endoplasmic reticulum membrane. High-affinity zinc transport protein. Regulates intracellular zinc levels. The protein is Zinc-regulated transporter 1 (zrt1) of Schizosaccharomyces pombe (strain 972 / ATCC 24843) (Fission yeast).